Consider the following 190-residue polypeptide: Orotate phosphoribosyltransferase (190 aa).

5-phospho-alpha-D-ribose 1-diphosphate is bound at residue 114–122 (EDVVTTGGS). Residues Thr-118 and Arg-146 each coordinate orotate.

This sequence belongs to the purine/pyrimidine phosphoribosyltransferase family. PyrE subfamily. Homodimer. Requires Mg(2+) as cofactor.

It carries out the reaction orotidine 5'-phosphate + diphosphate = orotate + 5-phospho-alpha-D-ribose 1-diphosphate. Its pathway is pyrimidine metabolism; UMP biosynthesis via de novo pathway; UMP from orotate: step 1/2. In terms of biological role, catalyzes the transfer of a ribosyl phosphate group from 5-phosphoribose 1-diphosphate to orotate, leading to the formation of orotidine monophosphate (OMP). This chain is Orotate phosphoribosyltransferase, found in Thermoanaerobacter sp. (strain X514).